An 884-amino-acid polypeptide reads, in one-letter code: Alanine--tRNA ligase (884 aa).

Histidine 565, histidine 569, cysteine 674, and histidine 678 together coordinate Zn(2+).

Belongs to the class-II aminoacyl-tRNA synthetase family. Requires Zn(2+) as cofactor.

It is found in the cytoplasm. The catalysed reaction is tRNA(Ala) + L-alanine + ATP = L-alanyl-tRNA(Ala) + AMP + diphosphate. Its function is as follows. Catalyzes the attachment of alanine to tRNA(Ala) in a two-step reaction: alanine is first activated by ATP to form Ala-AMP and then transferred to the acceptor end of tRNA(Ala). Also edits incorrectly charged Ser-tRNA(Ala) and Gly-tRNA(Ala) via its editing domain. The protein is Alanine--tRNA ligase of Xanthobacter autotrophicus (strain ATCC BAA-1158 / Py2).